A 324-amino-acid polypeptide reads, in one-letter code: Antihemorrhagic factor cHLP-A (324 aa).

The N-terminal stretch at 1-19 (MNSLVALVLLGQIIGSTLS) is a signal peptide. Cystatin fetuin-A-type domains are found at residues 21–130 (QLGP…VKCK) and 141–254 (RNCP…SDCV). 6 cysteine pairs are disulfide-bonded: cysteine 28/cysteine 315, cysteine 85/cysteine 96, cysteine 110/cysteine 129, cysteine 143/cysteine 146, cysteine 205/cysteine 217, and cysteine 230/cysteine 253. The N-linked (GlcNAc...) asparagine glycan is linked to asparagine 204. Asparagine 282 carries an N-linked (GlcNAc...) asparagine glycan.

Belongs to the fetuin family. In terms of assembly, homodimer. As to expression, expressed by the liver.

The protein resides in the secreted. Potent inhibitor of hemorrhagic activity but also proteolytic activities. Inhibition occurs by formation of a non-covalent complex between this protein and the proteinases at their metalloproteinase domains. The protein is Antihemorrhagic factor cHLP-A of Gloydius brevicauda (Korean slamosa snake).